The sequence spans 284 residues: MTANIIDGKAIAKQVRSAVAQRVSERVAQNLRAPGLAVVLVGLDPASQVYVGSKRKACEEVGFISKSFDLPANTTEQTLLELIDELNNDQEIDGILVQLPLPEGLDVEKILERITPHKDVDGFHPYNIGRLAQRMPALRPCTPKGIITLLDSTGVRYKGLHAVVVGASNIVGRPMALELLLAGCTTTVCHKFTQDLETHVRRADLLVVAVGKPEFIPGDWVKEGAIVIDVGINRLDSGKLVGDVEYSVAEQKADFITPVPGGVGPMTVASLIENTLEACEKYHS.

NADP(+) contacts are provided by residues 166 to 168 (GAS) and Ile-232.

It belongs to the tetrahydrofolate dehydrogenase/cyclohydrolase family. Homodimer.

It carries out the reaction (6R)-5,10-methylene-5,6,7,8-tetrahydrofolate + NADP(+) = (6R)-5,10-methenyltetrahydrofolate + NADPH. The catalysed reaction is (6R)-5,10-methenyltetrahydrofolate + H2O = (6R)-10-formyltetrahydrofolate + H(+). It functions in the pathway one-carbon metabolism; tetrahydrofolate interconversion. Functionally, catalyzes the oxidation of 5,10-methylenetetrahydrofolate to 5,10-methenyltetrahydrofolate and then the hydrolysis of 5,10-methenyltetrahydrofolate to 10-formyltetrahydrofolate. The polypeptide is Bifunctional protein FolD (Pseudoalteromonas translucida (strain TAC 125)).